The following is a 448-amino-acid chain: Chromosomal replication initiator protein DnaA 1 (448 aa).

The segment at 1-76 is domain I, interacts with DnaA modulators; that stretch reads MLTSETQNVW…FLPVDMSGEP (76 aa). The segment at 76–111 is domain II; it reads PAIRFIIAPPQKKIIPPNHFSISSSQKEEQSPNSDV. Residues 112-328 form a domain III, AAA+ region region; it reads KLNNNYRFEN…GAINRLSAHC (217 aa). ATP contacts are provided by Gly156, Gly158, Lys159, and Thr160. The interval 329-448 is domain IV, binds dsDNA; it reads RLLDLNITEE…IGMVRRNIES (120 aa).

Belongs to the DnaA family. Oligomerizes as a right-handed, spiral filament on DNA at oriC.

Its subcellular location is the cytoplasm. Its function is as follows. Plays an essential role in the initiation and regulation of chromosomal replication. ATP-DnaA binds to the origin of replication (oriC) to initiate formation of the DNA replication initiation complex once per cell cycle. Binds the DnaA box (a 9 base pair repeat at the origin) and separates the double-stranded (ds)DNA. Forms a right-handed helical filament on oriC DNA; dsDNA binds to the exterior of the filament while single-stranded (ss)DNA is stabiized in the filament's interior. The ATP-DnaA-oriC complex binds and stabilizes one strand of the AT-rich DNA unwinding element (DUE), permitting loading of DNA polymerase. After initiation quickly degrades to an ADP-DnaA complex that is not apt for DNA replication. Binds acidic phospholipids. This is Chromosomal replication initiator protein DnaA 1 from Protochlamydia amoebophila (strain UWE25).